A 274-amino-acid chain; its full sequence is Large ribosomal subunit protein uL2 (274 aa).

A disordered region spans residues 224–274; that stretch reads VAMNPVDHPHGGGEGRTSGGRHPVTPWGIPTKGYKTRRNKRSNKLIVQKRK. The span at 257-274 shows a compositional bias: basic residues; sequence YKTRRNKRSNKLIVQKRK.

This sequence belongs to the universal ribosomal protein uL2 family. Part of the 50S ribosomal subunit. Forms a bridge to the 30S subunit in the 70S ribosome.

Functionally, one of the primary rRNA binding proteins. Required for association of the 30S and 50S subunits to form the 70S ribosome, for tRNA binding and peptide bond formation. It has been suggested to have peptidyltransferase activity; this is somewhat controversial. Makes several contacts with the 16S rRNA in the 70S ribosome. The polypeptide is Large ribosomal subunit protein uL2 (Francisella tularensis subsp. holarctica (strain FTNF002-00 / FTA)).